We begin with the raw amino-acid sequence, 175 residues long: MSAPPIRQPIRILGIDPGLRRTGWGVIESCGNRLVFIGCGSVEPDNDLPLASRLLEIHHGLAKVLAEFVPAEAAVEQTFVNKDAGATLKLGQARGIAMLAPALVGIAVAEYAPNLIKKTVIGAGHADKAQIQMMLKILLPKAEPKTADAADALAIAITHAHHRGGALLRLKAVQA.

Residues Asp-16, Glu-76, and Asp-148 contribute to the active site. Residues Asp-16, Glu-76, and Asp-148 each coordinate Mg(2+).

The protein belongs to the RuvC family. In terms of assembly, homodimer which binds Holliday junction (HJ) DNA. The HJ becomes 2-fold symmetrical on binding to RuvC with unstacked arms; it has a different conformation from HJ DNA in complex with RuvA. In the full resolvosome a probable DNA-RuvA(4)-RuvB(12)-RuvC(2) complex forms which resolves the HJ. Mg(2+) is required as a cofactor.

The protein resides in the cytoplasm. The catalysed reaction is Endonucleolytic cleavage at a junction such as a reciprocal single-stranded crossover between two homologous DNA duplexes (Holliday junction).. Functionally, the RuvA-RuvB-RuvC complex processes Holliday junction (HJ) DNA during genetic recombination and DNA repair. Endonuclease that resolves HJ intermediates. Cleaves cruciform DNA by making single-stranded nicks across the HJ at symmetrical positions within the homologous arms, yielding a 5'-phosphate and a 3'-hydroxyl group; requires a central core of homology in the junction. The consensus cleavage sequence is 5'-(A/T)TT(C/G)-3'. Cleavage occurs on the 3'-side of the TT dinucleotide at the point of strand exchange. HJ branch migration catalyzed by RuvA-RuvB allows RuvC to scan DNA until it finds its consensus sequence, where it cleaves and resolves the cruciform DNA. This chain is Crossover junction endodeoxyribonuclease RuvC, found in Rhodopseudomonas palustris (strain BisB18).